Here is a 466-residue protein sequence, read N- to C-terminus: Probable Xaa-Pro aminopeptidase pepP (466 aa).

Mn(2+) contacts are provided by aspartate 264, aspartate 275, glutamate 398, and glutamate 438.

The protein belongs to the peptidase M24B family. Mn(2+) is required as a cofactor.

The catalysed reaction is Release of any N-terminal amino acid, including proline, that is linked to proline, even from a dipeptide or tripeptide.. Functionally, catalyzes the removal of a penultimate prolyl residue from the N-termini of peptides. This chain is Probable Xaa-Pro aminopeptidase pepP (pepP), found in Aspergillus niger (strain ATCC MYA-4892 / CBS 513.88 / FGSC A1513).